Here is a 181-residue protein sequence, read N- to C-terminus: ATP-dependent protease subunit HslV (181 aa).

T7 is a catalytic residue. Positions 162, 165, and 168 each coordinate Na(+).

The protein belongs to the peptidase T1B family. HslV subfamily. In terms of assembly, a double ring-shaped homohexamer of HslV is capped on each side by a ring-shaped HslU homohexamer. The assembly of the HslU/HslV complex is dependent on binding of ATP.

It localises to the cytoplasm. The catalysed reaction is ATP-dependent cleavage of peptide bonds with broad specificity.. Allosterically activated by HslU binding. Functionally, protease subunit of a proteasome-like degradation complex believed to be a general protein degrading machinery. The sequence is that of ATP-dependent protease subunit HslV from Coxiella burnetii (strain RSA 331 / Henzerling II).